The following is a 694-amino-acid chain: Long-chain-fatty-acid--CoA ligase 3 (694 aa).

The disordered stretch occupies residues 1 to 25; the sequence is MSEQHSVAVGKAANEHETAPRRNVR. The residue at position 2 (Ser-2) is an N-acetylserine. 269–280 provides a ligand contact to ATP; it reads YTSGSISAPKGV. The FACS signature appears at 527-576; it reads DGWFRTGDIVEWTPKGQLKIIDRRKNLVKTLNGEYIALEKLESVYRSNSY.

It belongs to the ATP-dependent AMP-binding enzyme family. Interacts with FRK1. It depends on Mg(2+) as a cofactor.

The protein localises to the cell membrane. The enzyme catalyses a long-chain fatty acid + ATP + CoA = a long-chain fatty acyl-CoA + AMP + diphosphate. It catalyses the reaction (9Z)-octadecenoate + ATP + CoA = (9Z)-octadecenoyl-CoA + AMP + diphosphate. It carries out the reaction hexadecanoate + ATP + CoA = hexadecanoyl-CoA + AMP + diphosphate. The catalysed reaction is (9Z)-hexadecenoate + ATP + CoA = (9Z)-hexadecenoyl-CoA + AMP + diphosphate. The enzyme catalyses (9Z)-tetradecenoate + ATP + CoA = (9Z)-tetradecenoyl-CoA + AMP + diphosphate. It catalyses the reaction (9Z,12Z)-octadecadienoate + ATP + CoA = (9Z,12Z)-octadecadienoyl-CoA + AMP + diphosphate. Functionally, activates endogenous long-chain fatty acids (LCFA) by esterification of the fatty acids into metabolically active CoA-thioesters for subsequent degradation or incorporation into phospholipids. Acts preferentially on C16 and C18 fatty acids with a cis-double bond at C-9-C-10. In Saccharomyces cerevisiae (strain ATCC 204508 / S288c) (Baker's yeast), this protein is Long-chain-fatty-acid--CoA ligase 3 (FAA3).